A 358-amino-acid polypeptide reads, in one-letter code: Putative UDP-kanosamine synthase oxidoreductase subunit (358 aa).

Interacts with RifK.

The enzyme catalyses UDP-alpha-D-glucose + NAD(+) = UDP-3-oxo-alpha-D-glucose + NADH + H(+). It functions in the pathway antibiotic biosynthesis; rifamycin B biosynthesis. Its function is as follows. In a complex with RifK, RifL may catalyze the oxidation of UDP-glucose to UDP-3-keto-D-glucose, which would then be used by RifK to produce UDP-kanosamine. Is not able to use dTDP-glucose as substrate. This Amycolatopsis mediterranei (strain S699) (Nocardia mediterranei) protein is Putative UDP-kanosamine synthase oxidoreductase subunit (rifL).